A 285-amino-acid chain; its full sequence is Urease accessory protein UreD (285 aa).

Belongs to the UreD family. UreD, UreF and UreG form a complex that acts as a GTP-hydrolysis-dependent molecular chaperone, activating the urease apoprotein by helping to assemble the nickel containing metallocenter of UreC. The UreE protein probably delivers the nickel.

The protein resides in the cytoplasm. Functionally, required for maturation of urease via the functional incorporation of the urease nickel metallocenter. The chain is Urease accessory protein UreD from Cenarchaeum symbiosum (strain A).